Consider the following 103-residue polypeptide: Small ribosomal subunit protein uS10 (103 aa).

Belongs to the universal ribosomal protein uS10 family. In terms of assembly, part of the 30S ribosomal subunit.

Involved in the binding of tRNA to the ribosomes. This Aliivibrio fischeri (strain ATCC 700601 / ES114) (Vibrio fischeri) protein is Small ribosomal subunit protein uS10.